A 405-amino-acid polypeptide reads, in one-letter code: Beta-citrylglutamate synthase B (405 aa).

The 186-residue stretch at 115 to 300 (FQELAGHGVP…VAGIVADFVL (186 aa)) folds into the ATP-grasp domain. ATP is bound by residues K154, 189-199 (QEYVKESHGRD), and R215. 3 residues coordinate Mg(2+): D260, E273, and N275. D260, E273, and N275 together coordinate Mn(2+). Residues 359–387 (AMSTMSTSSTSSESEADLTETGPTPVGAN) form a disordered region. Residues 360–371 (MSTMSTSSTSSE) show a composition bias toward low complexity.

The protein belongs to the RimK family. Mg(2+) is required as a cofactor. The cofactor is Mn(2+).

It is found in the cytoplasm. It catalyses the reaction citrate + L-glutamate + ATP = beta-citrylglutamate + ADP + phosphate + H(+). The enzyme catalyses N-acetyl-L-aspartate + L-glutamate + ATP = N-acetyl-L-aspartyl-L-glutamate + ADP + phosphate + H(+). In terms of biological role, catalyzes the synthesis of beta-citryl-L-glutamate and N-acetyl-L-aspartyl-L-glutamate. Beta-citryl-L-glutamate is synthesized more efficiently than N-acetyl-L-aspartyl-L-glutamate. This is Beta-citrylglutamate synthase B (rimklb) from Danio rerio (Zebrafish).